Reading from the N-terminus, the 487-residue chain is 2-aminomuconic semialdehyde dehydrogenase (487 aa).

231 to 236 (GSTATA) provides a ligand contact to NAD(+). The active-site Proton acceptor is the glutamate 253. Residue cysteine 287 is the Nucleophile of the active site.

The protein belongs to the aldehyde dehydrogenase family.

It is found in the cytoplasm. It catalyses the reaction 2-aminomuconate 6-semialdehyde + NAD(+) + H2O = (2Z,4E)-2-aminomuconate + NADH + 2 H(+). Its pathway is amino-acid degradation; L-kynurenine degradation. Its function is as follows. Catalyzes the NAD-dependent oxidation of 2-aminomuconic semialdehyde of the kynurenine metabolic pathway in L-tryptophan degradation. The protein is 2-aminomuconic semialdehyde dehydrogenase (aldh8a1) of Danio rerio (Zebrafish).